The sequence spans 129 residues: D-ribose pyranase (129 aa).

The active-site Proton donor is H20. Residues D28, H96, and 118–120 (YAN) contribute to the substrate site.

This sequence belongs to the RbsD / FucU family. RbsD subfamily. Homodecamer.

It localises to the cytoplasm. It carries out the reaction beta-D-ribopyranose = beta-D-ribofuranose. It participates in carbohydrate metabolism; D-ribose degradation; D-ribose 5-phosphate from beta-D-ribopyranose: step 1/2. Catalyzes the interconversion of beta-pyran and beta-furan forms of D-ribose. In Staphylococcus saprophyticus subsp. saprophyticus (strain ATCC 15305 / DSM 20229 / NCIMB 8711 / NCTC 7292 / S-41), this protein is D-ribose pyranase.